Here is a 323-residue protein sequence, read N- to C-terminus: AA9 family lytic polysaccharide monooxygenase B (323 aa).

Residues 1-18 (MKSFTLTTLAALAGNAAA) form the signal peptide. Cu(2+) is bound by residues His-19 and His-97. An intrachain disulfide couples Cys-56 to Cys-191. The O2 site is built by His-177 and Gln-186. Tyr-188 contacts Cu(2+). A CBM1 domain is found at 286–323 (CTVQKYQQCGGQGYTGCTNCASGSTCSAVSPPYYSQCV).

It belongs to the polysaccharide monooxygenase AA9 family. The cofactor is Cu(2+).

Its subcellular location is the secreted. The catalysed reaction is [(1-&gt;4)-beta-D-glucosyl]n+m + reduced acceptor + O2 = 4-dehydro-beta-D-glucosyl-[(1-&gt;4)-beta-D-glucosyl]n-1 + [(1-&gt;4)-beta-D-glucosyl]m + acceptor + H2O.. Its activity is regulated as follows. Is able to utilize various natural phenolic compounds as reducing agents. Most of these reducing agents are present in plants, either free or as lignin building blocks, such as sinapic acid, or as flavonoids such as catechin and dopamine. Phenolic compounds with 1,2-benzenediol and 1,2,3-benzenetriol moieties yield the highest release of oxidized and non-oxidized glucooligosaccharides from cellulose compared to monophenols or sulfur-containing compounds. In terms of biological role, lytic polysaccharide monooxygenase (LPMO) that depolymerizes crystalline and amorphous polysaccharides via the oxidation of scissile alpha- or beta-(1-4)-glycosidic bonds, yielding C1 oxidation products. Catalysis by LPMOs requires the reduction of the active-site copper from Cu(II) to Cu(I) by a reducing agent and H(2)O(2) or O(2) as a cosubstrate. Is active on regenerated amorphous cellulose (RAC). The sequence is that of AA9 family lytic polysaccharide monooxygenase B from Thermothelomyces thermophilus (strain ATCC 42464 / BCRC 31852 / DSM 1799) (Sporotrichum thermophile).